Consider the following 968-residue polypeptide: RNA polymerase-associated protein RapA (968 aa).

The 171-residue stretch at 164 to 334 (DVGRRHAPRV…FARLRLLDPN (171 aa)) folds into the Helicase ATP-binding domain. 177 to 184 (DEVGLGKT) provides a ligand contact to ATP. A DEAH box motif is present at residues 280–283 (DEAH). In terms of domain architecture, Helicase C-terminal spans 490-662 (RVEWLMGYLT…YLASPDQTEG (173 aa)).

This sequence belongs to the SNF2/RAD54 helicase family. RapA subfamily. As to quaternary structure, interacts with the RNAP. Has a higher affinity for the core RNAP than for the holoenzyme. Its ATPase activity is stimulated by binding to RNAP.

Its function is as follows. Transcription regulator that activates transcription by stimulating RNA polymerase (RNAP) recycling in case of stress conditions such as supercoiled DNA or high salt concentrations. Probably acts by releasing the RNAP, when it is trapped or immobilized on tightly supercoiled DNA. Does not activate transcription on linear DNA. Probably not involved in DNA repair. The sequence is that of RNA polymerase-associated protein RapA from Escherichia fergusonii (strain ATCC 35469 / DSM 13698 / CCUG 18766 / IAM 14443 / JCM 21226 / LMG 7866 / NBRC 102419 / NCTC 12128 / CDC 0568-73).